The primary structure comprises 716 residues: Zinc finger protein 840 (716 aa).

The region spanning 42–113 (VRFRDVAVVF…EREVTGDPCP (72 aa)) is the KRAB domain. 18 consecutive C2H2-type zinc fingers follow at residues 151–173 (YECD…QKIH), 207–229 (FECN…QSMH), 235–257 (YKCD…QRFH), 277–299 (FSCN…LLIH), 305–327 (YTCN…QRTH), 333–355 (HKCD…QKTH), 361–383 (FSCN…QQIH), 389–411 (FICS…KGTH), 417–439 (YQCT…QKTH), 445–467 (FACN…KKIH), 473–495 (YECG…KKIH), 501–523 (FVCN…QRTH), 549–571 (FPCN…QQIH), 577–599 (FICS…KGTH), 605–627 (YQCT…QKTH), 633–655 (FTCN…KKIH), 661–683 (YECG…KKIH), and 689–711 (FVCN…QITH). Positions 515 to 548 (KLSRHQRTHNKKENSSKSVSNLNKHQKTHAGEKP) are disordered.

Belongs to the krueppel C2H2-type zinc-finger protein family.

It is found in the nucleus. May be involved in transcriptional regulation. The sequence is that of Zinc finger protein 840 (ZNF840P) from Homo sapiens (Human).